The primary structure comprises 183 residues: Translocon-associated protein subunit beta (183 aa).

Positions 1–17 (MRLLSFVVLALFAVTQA) are cleaved as a signal peptide. The Lumenal portion of the chain corresponds to 18–149 (EEGARLLASK…DRRFSPHFLD (132 aa)). Residues N88 and N104 are each glycosylated (N-linked (GlcNAc...) asparagine). A helical membrane pass occupies residues 150–169 (WAAFGVMTLPSIGIPLLLWY). Residues 170–183 (SSKRKYDTPKTKKN) lie on the Cytoplasmic side of the membrane.

This sequence belongs to the TRAP-beta family. In terms of assembly, heterotetramer of TRAP-alpha, TRAP-beta, TRAP-delta and TRAP-gamma. Interacts with STING1.

The protein localises to the endoplasmic reticulum membrane. Its function is as follows. TRAP proteins are part of a complex whose function is to bind calcium to the ER membrane and thereby regulate the retention of ER resident proteins. The protein is Translocon-associated protein subunit beta (SSR2) of Homo sapiens (Human).